The primary structure comprises 239 residues: uncharacterized protein (239 aa).

This is an uncharacterized protein from Bacillus subtilis (strain 168).